The sequence spans 76 residues: Conotoxin Ca11b (76 aa).

Residues Met-1 to Gly-19 form the signal peptide. The propeptide occupies Ala-20–Lys-42. 4 cysteine pairs are disulfide-bonded: Cys-46–Cys-60, Cys-53–Cys-65, Cys-59–Cys-69, and Cys-64–Cys-76.

In terms of tissue distribution, expressed by the venom duct.

Its subcellular location is the secreted. This chain is Conotoxin Ca11b, found in Conus caracteristicus (Characteristic cone).